Here is a 919-residue protein sequence, read N- to C-terminus: Chaperone protein ClpC2, chloroplastic (919 aa).

The transit peptide at 1–54 directs the protein to the chloroplast; the sequence is MAGTLLQPVALGTTFAGRVSGQRWKSHGTRRPPSMLAMSLSRPVKMAAFVGLRS. In terms of domain architecture, Clp R spans 89–231; it reads FERFTEKAIK…RTQVIRMIGE (143 aa). Repeat stretches follow at residues 92–157 and 167–231; these read FTEK…IGRG and FTPR…MIGE. The tract at residues 252–499 is i; sequence LEEYGTNLTK…RVRLRHAQVP (248 aa). Residue 297–304 coordinates ATP; the sequence is GEPGVGKT. The 36-residue stretch at 506-541 folds into the UVR domain; the sequence is DKELKQITKDKNEAVRSQDFEKAGELRDREMELKAQ. An II region spans residues 566 to 757; the sequence is VNEADIQHIV…LLIMTSNVGS (192 aa). 640 to 647 is a binding site for ATP; that stretch reads GPTGVGKS.

It belongs to the ClpA/ClpB family. ClpC subfamily.

It is found in the plastid. The protein resides in the chloroplast. Its function is as follows. Molecular chaperone that may interact with a ClpP-like protease involved in degradation of denatured proteins in the chloroplast. The chain is Chaperone protein ClpC2, chloroplastic (CLPC2) from Oryza sativa subsp. japonica (Rice).